The sequence spans 384 residues: MPIAAAKPALLVLADGTPYPGWSFGADGTTVGEVVFNTGMTGYQEVMTDPSYCGQIVTFTYPELGNTGVNAEDEESIHPHVKGVVARNITRRPSNWRSTQSLPDYLVEHKIIGIYGIDTRALTRKLRSIGAMNGGISTEILEPEALLHHIQAAPSMAGLNLVKEVTTHEVYEWTDSTNDHWQFGPVAEQQGQPPLTVVALDFGVKRNILRRLASYGCRVIVVPASTSAAEILQYNPDGIFLSNGPGDPSAVEEGIVTTKELLAAKKPMFGICMGHQVLGLSLGAETFKLKFGHRGLNQPCGLEQQVEITSQNHGFAVTEGSLAEEVEITHFNLNDKTVAGLRHKELPFFSVQYHPEASPGPHDADYLFEKFVKLMRQQKAEVAG.

The tract at residues 1–192 (MPIAAAKPAL…FGPVAEQQGQ (192 aa)) is CPSase. Residues Ser-51, Gly-244, and Gly-246 each coordinate L-glutamine. The Glutamine amidotransferase type-1 domain occupies 196 to 381 (TVVALDFGVK…VKLMRQQKAE (186 aa)). Cys-272 acts as the Nucleophile in catalysis. Positions 273, 276, 312, 314, and 315 each coordinate L-glutamine. Active-site residues include His-354 and Glu-356.

Belongs to the CarA family. In terms of assembly, composed of two chains; the small (or glutamine) chain promotes the hydrolysis of glutamine to ammonia, which is used by the large (or ammonia) chain to synthesize carbamoyl phosphate. Tetramer of heterodimers (alpha,beta)4.

It carries out the reaction hydrogencarbonate + L-glutamine + 2 ATP + H2O = carbamoyl phosphate + L-glutamate + 2 ADP + phosphate + 2 H(+). It catalyses the reaction L-glutamine + H2O = L-glutamate + NH4(+). Its pathway is amino-acid biosynthesis; L-arginine biosynthesis; carbamoyl phosphate from bicarbonate: step 1/1. The protein operates within pyrimidine metabolism; UMP biosynthesis via de novo pathway; (S)-dihydroorotate from bicarbonate: step 1/3. Functionally, small subunit of the glutamine-dependent carbamoyl phosphate synthetase (CPSase). CPSase catalyzes the formation of carbamoyl phosphate from the ammonia moiety of glutamine, carbonate, and phosphate donated by ATP, constituting the first step of 2 biosynthetic pathways, one leading to arginine and/or urea and the other to pyrimidine nucleotides. The small subunit (glutamine amidotransferase) binds and cleaves glutamine to supply the large subunit with the substrate ammonia. This chain is Carbamoyl phosphate synthase small chain, found in Synechocystis sp. (strain ATCC 27184 / PCC 6803 / Kazusa).